We begin with the raw amino-acid sequence, 153 residues long: Ubiquitin/ISG15-conjugating enzyme E2 L6 (153 aa).

Positions 2–149 (MASKRVAKEL…AEEFTLKFGV (148 aa)) constitute a UBC core domain. C86 serves as the catalytic Glycyl thioester intermediate.

This sequence belongs to the ubiquitin-conjugating enzyme family. In terms of assembly, interacts with RNF19A, RNF19B and RNF144B. Interacts with FLT3 (tyrosine phosphorylated). Post-translationally, ISGylated.

It catalyses the reaction S-ubiquitinyl-[E1 ubiquitin-activating enzyme]-L-cysteine + [E2 ubiquitin-conjugating enzyme]-L-cysteine = [E1 ubiquitin-activating enzyme]-L-cysteine + S-ubiquitinyl-[E2 ubiquitin-conjugating enzyme]-L-cysteine.. It participates in protein modification; protein ubiquitination. In terms of biological role, catalyzes the covalent attachment of ubiquitin or ISG15 to other proteins. Functions in the E6/E6-AP-induced ubiquitination of p53/TP53. Promotes ubiquitination and subsequent proteasomal degradation of FLT3. The chain is Ubiquitin/ISG15-conjugating enzyme E2 L6 (Ube2l6) from Mus musculus (Mouse).